The sequence spans 309 residues: Tagatose-6-phosphate kinase 1 (309 aa).

The protein belongs to the carbohydrate kinase PfkB family. LacC subfamily.

The enzyme catalyses D-tagatofuranose 6-phosphate + ATP = D-tagatofuranose 1,6-bisphosphate + ADP + H(+). It participates in carbohydrate metabolism; D-tagatose 6-phosphate degradation; D-glyceraldehyde 3-phosphate and glycerone phosphate from D-tagatose 6-phosphate: step 1/2. The sequence is that of Tagatose-6-phosphate kinase 1 from Streptococcus agalactiae serotype III (strain NEM316).